The following is a 107-amino-acid chain: uncharacterized protein (107 aa).

3 helical membrane passes run 20–40, 49–69, and 86–106; these read FISL…EVGI, PAIL…ISTV, and VVML…KLFL.

The protein localises to the membrane. This is an uncharacterized protein from Saccharomyces cerevisiae (strain ATCC 204508 / S288c) (Baker's yeast).